Consider the following 475-residue polypeptide: Aspartyl/glutamyl-tRNA(Asn/Gln) amidotransferase subunit B (475 aa).

This sequence belongs to the GatB/GatE family. GatB subfamily. In terms of assembly, heterotrimer of A, B and C subunits.

The catalysed reaction is L-glutamyl-tRNA(Gln) + L-glutamine + ATP + H2O = L-glutaminyl-tRNA(Gln) + L-glutamate + ADP + phosphate + H(+). It carries out the reaction L-aspartyl-tRNA(Asn) + L-glutamine + ATP + H2O = L-asparaginyl-tRNA(Asn) + L-glutamate + ADP + phosphate + 2 H(+). In terms of biological role, allows the formation of correctly charged Asn-tRNA(Asn) or Gln-tRNA(Gln) through the transamidation of misacylated Asp-tRNA(Asn) or Glu-tRNA(Gln) in organisms which lack either or both of asparaginyl-tRNA or glutaminyl-tRNA synthetases. The reaction takes place in the presence of glutamine and ATP through an activated phospho-Asp-tRNA(Asn) or phospho-Glu-tRNA(Gln). The chain is Aspartyl/glutamyl-tRNA(Asn/Gln) amidotransferase subunit B from Staphylococcus epidermidis (strain ATCC 12228 / FDA PCI 1200).